The following is a 118-amino-acid chain: Small ribosomal subunit protein uS13 (118 aa).

Residues 94-118 form a disordered region; the sequence is GLPVRGQRTKTNARTRKGPRKPIKK.

Belongs to the universal ribosomal protein uS13 family. In terms of assembly, part of the 30S ribosomal subunit. Forms a loose heterodimer with protein S19. Forms two bridges to the 50S subunit in the 70S ribosome.

Located at the top of the head of the 30S subunit, it contacts several helices of the 16S rRNA. In the 70S ribosome it contacts the 23S rRNA (bridge B1a) and protein L5 of the 50S subunit (bridge B1b), connecting the 2 subunits; these bridges are implicated in subunit movement. Contacts the tRNAs in the A and P-sites. This chain is Small ribosomal subunit protein uS13, found in Salmonella paratyphi A (strain ATCC 9150 / SARB42).